Reading from the N-terminus, the 190-residue chain is uncharacterized protein (190 aa).

A helical transmembrane segment spans residues 1 to 21 (MLVMSITFSFVAVALLVYFYV). Residues 103–114 (REEVCARPEHRS) are compositionally biased toward basic and acidic residues. Residues 103–130 (REEVCARPEHRSAPSRAGSSAAKPTPTK) are disordered.

This sequence to B.burgdorferi BB0265.

The protein resides in the membrane. This is an uncharacterized protein from Treponema pallidum (strain Nichols).